The chain runs to 535 residues: F-box protein At1g56610 (535 aa).

Transmembrane regions (helical) follow at residues 3–23 (FALVLIFLFGFYLFLMKSSSI), 37–57 (VLLLVLRFLFSLIQILILCLF), and 82–102 (LAPHILSWLPTKTAVTVSLLF). The region spanning 73–119 (TELCDLPKCLAPHILSWLPTKTAVTVSLLFMKGWWRSEMKNLSSLKF) is the F-box; degenerate domain.

Part of a SCF (ASK-cullin-F-box) protein ligase complex. Interacts with ASK4.

Its subcellular location is the membrane. Its pathway is protein modification; protein ubiquitination. Component of SCF(ASK-cullin-F-box) E3 ubiquitin ligase complexes, which may mediate the ubiquitination and subsequent proteasomal degradation of target proteins. The polypeptide is F-box protein At1g56610 (Arabidopsis thaliana (Mouse-ear cress)).